The chain runs to 753 residues: Replication restart protein PriA (753 aa).

In terms of domain architecture, Helicase ATP-binding spans 228–395 (SLITTKFQTC…LSKKYTLSVL (168 aa)). Position 241–248 (241–248 (GVTGSGKT)) interacts with ATP. The short motif at 337-340 (DEEH) is the DEAH box element. Zn(2+)-binding residues include cysteine 458, cysteine 461, cysteine 467, cysteine 470, cysteine 485, cysteine 488, cysteine 499, and cysteine 502. One can recognise a Helicase C-terminal domain in the interval 491 to 646 (RLSKPITSCP…DFPAFYKEEI (156 aa)).

It belongs to the helicase family. PriA subfamily. Component of the replication restart primosome. Requires Zn(2+) as cofactor.

It carries out the reaction Couples ATP hydrolysis with the unwinding of duplex DNA by translocating in the 3'-5' direction.. The enzyme catalyses ATP + H2O = ADP + phosphate + H(+). Its function is as follows. Initiates the restart of stalled replication forks, which reloads the replicative helicase on sites other than the origin of replication. Recognizes and binds to abandoned replication forks and remodels them to uncover a helicase loading site. Promotes assembly of the primosome at these replication forks. This Chlamydia muridarum (strain MoPn / Nigg) protein is Replication restart protein PriA.